The sequence spans 417 residues: Gamma-glutamyl phosphate reductase (417 aa).

Belongs to the gamma-glutamyl phosphate reductase family.

The protein localises to the cytoplasm. The enzyme catalyses L-glutamate 5-semialdehyde + phosphate + NADP(+) = L-glutamyl 5-phosphate + NADPH + H(+). Its pathway is amino-acid biosynthesis; L-proline biosynthesis; L-glutamate 5-semialdehyde from L-glutamate: step 2/2. Its function is as follows. Catalyzes the NADPH-dependent reduction of L-glutamate 5-phosphate into L-glutamate 5-semialdehyde and phosphate. The product spontaneously undergoes cyclization to form 1-pyrroline-5-carboxylate. In Pectobacterium carotovorum subsp. carotovorum (strain PC1), this protein is Gamma-glutamyl phosphate reductase.